The chain runs to 468 residues: ATP synthase subunit beta 3 (468 aa).

155 to 162 (GGAGVGKT) serves as a coordination point for ATP.

The protein belongs to the ATPase alpha/beta chains family. In terms of assembly, F-type ATPases have 2 components, CF(1) - the catalytic core - and CF(0) - the membrane proton channel. CF(1) has five subunits: alpha(3), beta(3), gamma(1), delta(1), epsilon(1). CF(0) has three main subunits: a(1), b(2) and c(9-12). The alpha and beta chains form an alternating ring which encloses part of the gamma chain. CF(1) is attached to CF(0) by a central stalk formed by the gamma and epsilon chains, while a peripheral stalk is formed by the delta and b chains.

It localises to the cell inner membrane. It catalyses the reaction ATP + H2O + 4 H(+)(in) = ADP + phosphate + 5 H(+)(out). Produces ATP from ADP in the presence of a proton gradient across the membrane. The catalytic sites are hosted primarily by the beta subunits. This Syntrophotalea carbinolica (strain DSM 2380 / NBRC 103641 / GraBd1) (Pelobacter carbinolicus) protein is ATP synthase subunit beta 3.